The following is a 316-amino-acid chain: Protease HtpX homolog (316 aa).

Residues 16–36 (LFMALGFTIGGTGGAMIALVV) traverse the membrane as a helical segment. Residue His130 coordinates Zn(2+). Glu131 is an active-site residue. Position 134 (His134) interacts with Zn(2+). Helical transmembrane passes span 145–165 (MTATIAGAISMLANFGMFFGA) and 174–194 (LATILAVFVAPFAAMIVQMAI). Zn(2+) is bound at residue Glu199. The disordered stretch occupies residues 285–316 (PNFAALSERRGSVSSVPRTRRRSSALDPNGRG).

The protein belongs to the peptidase M48B family. Zn(2+) is required as a cofactor.

Its subcellular location is the cell inner membrane. The protein is Protease HtpX homolog of Rhizorhabdus wittichii (strain DSM 6014 / CCUG 31198 / JCM 15750 / NBRC 105917 / EY 4224 / RW1) (Sphingomonas wittichii).